A 444-amino-acid polypeptide reads, in one-letter code: Platelet-activating factor acetylhydrolase (444 aa).

The signal sequence occupies residues 1 to 21 (MLPSKLHALFCLCTCLALVYP). N-linked (GlcNAc...) asparagine glycosylation is found at N60 and N200. S274 serves as the catalytic Nucleophile. Active-site charge relay system residues include D297 and H352. Residues N424 and N434 are each glycosylated (N-linked (GlcNAc...) asparagine).

This sequence belongs to the AB hydrolase superfamily. Lipase family. In terms of processing, N-glycosylated. Plasma.

The protein resides in the secreted. Its subcellular location is the extracellular space. The catalysed reaction is a 1-O-alkyl-2-acetyl-sn-glycero-3-phosphocholine + H2O = a 1-O-alkyl-sn-glycero-3-phosphocholine + acetate + H(+). The enzyme catalyses 1-O-decyl-2-acetyl-sn-glycero-3-phosphocholine + H2O = 1-O-decyl-sn-glycero-3-phosphocholine + acetate + H(+). It carries out the reaction 1-O-dodecyl-2-acetyl-sn-glycero-3-phosphocholine + H2O = 1-O-dodecyl-sn-glycero-3-phosphocholine + acetate + H(+). It catalyses the reaction 1-O-tetradecyl-2-acetyl-sn-glycero-3-phosphocholine + H2O = 1-O-tetradecyl-sn-glycero-3-phosphocholine + acetate + H(+). The catalysed reaction is 1-O-hexadecyl-2-acetyl-sn-glycero-3-phosphocholine + H2O = 1-O-hexadecyl-sn-glycero-3-phosphocholine + acetate + H(+). The enzyme catalyses 1-O-octadecyl-2-acetyl-sn-glycero-3-phosphocholine + H2O = 1-O-octadecyl-sn-glycero-3-phosphocholine + acetate + H(+). It carries out the reaction 1-hexadecanoyl-2-acetyl-sn-glycero-3-phosphocholine + H2O = 1-hexadecanoyl-sn-glycero-3-phosphocholine + acetate + H(+). It catalyses the reaction 1-hexadecanoyl-2-propionyl-sn-glycero-3-phosphocholine + H2O = propanoate + 1-hexadecanoyl-sn-glycero-3-phosphocholine + H(+). The catalysed reaction is 1-hexadecanoyl-2-butanoyl-sn-glycero-3-phosphocholine + H2O = butanoate + 1-hexadecanoyl-sn-glycero-3-phosphocholine + H(+). The enzyme catalyses 1-hexadecanoyl-2-pentanoyl-sn-glycero-3-phosphocholine + H2O = pentanoate + 1-hexadecanoyl-sn-glycero-3-phosphocholine + H(+). It carries out the reaction 1-hexadecanoyl-2-glutaroyl-sn-glycero-3-phosphocholine + H2O = glutarate + 1-hexadecanoyl-sn-glycero-3-phosphocholine + H(+). It catalyses the reaction 1-hexadecanoyl-2-(5-oxopentanoyl)-sn-glycero-3-phosphocholine + H2O = 5-oxopentanoate + 1-hexadecanoyl-sn-glycero-3-phosphocholine + H(+). The catalysed reaction is 1-hexadecanoyl-2-(9-oxononanoyl)-sn-glycero-3-phosphocholine + H2O = 9-oxononanoate + 1-hexadecanoyl-sn-glycero-3-phosphocholine + H(+). The enzyme catalyses 1-hexadecanoyl-2-[9-hydroperoxy-(10E-octadecenoyl)]-sn-glycero-3-phosphocholine + H2O = 9-hydroperoxy-10E-octadecenoate + 1-hexadecanoyl-sn-glycero-3-phosphocholine + H(+). It carries out the reaction 1-hexadecanoyl-2-(10-hydroperoxy-8E-octadecenoyl)-sn-glycero-3-phosphocholine + H2O = 10-hydroperoxy-(8E)-octadecenoate + 1-hexadecanoyl-sn-glycero-3-phosphocholine + H(+). Functionally, lipoprotein-associated calcium-independent phospholipase A2 involved in phospholipid catabolism during inflammatory and oxidative stress response. At the lipid-aqueous interface, hydrolyzes the ester bond of fatty acyl group attached at sn-2 position of phospholipids (phospholipase A2 activity). Specifically targets phospholipids with a short-chain fatty acyl group at sn-2 position. Can hydrolyze phospholipids with long fatty acyl chains, only if they carry oxidized functional groups. Hydrolyzes and inactivates platelet-activating factor (PAF, 1-O-alkyl-2-acetyl-sn-glycero-3-phosphocholine), a potent pro-inflammatory signaling lipid that acts through PTAFR on various innate immune cells. Hydrolyzes oxidatively truncated phospholipids carrying an aldehyde group at omega position, preventing their accumulation in low-density lipoprotein (LDL) particles and uncontrolled pro-inflammatory effects. As part of high-density lipoprotein (HDL) particles, can hydrolyze phospholipids having long-chain fatty acyl hydroperoxides at sn-2 position and protect against potential accumulation of these oxylipins in the vascular wall. Catalyzes the release from membrane phospholipids of F2-isoprostanes, lipid biomarkers of cellular oxidative damage. The polypeptide is Platelet-activating factor acetylhydrolase (PLA2G7) (Bos taurus (Bovine)).